The primary structure comprises 560 residues: Kinesin light chain 1 (560 aa).

A coiled-coil region spans residues 31 to 99 (VIQGLEALKN…MALSNHLNAV (69 aa)). The span at 155–176 (KKYDDDISPSEDKDTDSTKEPL) shows a compositional bias: basic and acidic residues. The disordered stretch occupies residues 155 to 203 (KKYDDDISPSEDKDTDSTKEPLDDLFPNDEDDPGQGIQQQHSSAAAAAQ). Position 162 is a phosphoserine (Ser-162). A compositionally biased stretch (low complexity) spans 192–203 (QQQHSSAAAAAQ). TPR repeat units follow at residues 213 to 246 (LRTL…LEKT), 255 to 288 (ATML…REKT), 297 to 330 (AATL…REKV), 339 to 372 (AKQL…YQTK), and 381 to 414 (AKTK…AHER). Tyr-449 bears the Phosphotyrosine mark. Ser-460 is subject to Phosphoserine. A TPR 6 repeat occupies 464–497 (TTTLKNLGALYRRQGKFEAAETLEEAAMRSRKQG). Phosphoserine; by AMPK is present on residues Ser-521 and Ser-524.

This sequence belongs to the kinesin light chain family. As to quaternary structure, oligomeric complex composed of two heavy chains and two light chains. Interacts with SPAG9. Interacts with ATCAY; may link mitochondria to KLC1 and regulate mitochondria localization into neuron projections. Interacts (via TPR repeats) with TOR1A; the interaction associates TOR1A with the kinesin oligomeric complex. Interacts with BORCS5. Interacts with MAPK8IP3/JIP3 and NTRK2/TRKB; interaction with NTRK2/TRKB is mediated by MAPK8IP3/JIP3. Interacts with CLSTN1; phosphorylation at Ser-460 inhibits interaction with CLSTN1. In terms of processing, phosphorylation at Ser-460 by ERK inhibits interaction with CLSTN1 and localization to cytoplasmic vesicles.

The protein resides in the cell projection. The protein localises to the growth cone. It localises to the cytoplasmic vesicle. Its subcellular location is the cytoplasm. It is found in the cytoskeleton. Its function is as follows. Kinesin is a microtubule-associated force-producing protein that may play a role in organelle transport. The light chain may function in coupling of cargo to the heavy chain or in the modulation of its ATPase activity. This Pongo abelii (Sumatran orangutan) protein is Kinesin light chain 1 (KLC1).